The primary structure comprises 445 residues: Glutamyl-tRNA(Gln) amidotransferase subunit D (445 aa).

One can recognise an Asparaginase/glutaminase domain in the interval 93 to 425 (SEIKIISTGG…EKIRSLMISN (333 aa)). Residues T103, T179, D180, and K258 contribute to the active site.

Belongs to the asparaginase 1 family. GatD subfamily. Heterodimer of GatD and GatE.

It carries out the reaction L-glutamyl-tRNA(Gln) + L-glutamine + ATP + H2O = L-glutaminyl-tRNA(Gln) + L-glutamate + ADP + phosphate + H(+). Its function is as follows. Allows the formation of correctly charged Gln-tRNA(Gln) through the transamidation of misacylated Glu-tRNA(Gln) in organisms which lack glutaminyl-tRNA synthetase. The reaction takes place in the presence of glutamine and ATP through an activated gamma-phospho-Glu-tRNA(Gln). The GatDE system is specific for glutamate and does not act on aspartate. This chain is Glutamyl-tRNA(Gln) amidotransferase subunit D, found in Saccharolobus islandicus (strain Y.N.15.51 / Yellowstone #2) (Sulfolobus islandicus).